The following is a 145-amino-acid chain: Lipoprotein signal peptidase (145 aa).

A run of 2 helical transmembrane segments spans residues 57-77 (LFFIVITVVVGIVLIYSMIKL) and 79-99 (ENSLYNYTLAMILGGAIGNLI). Active-site residues include Asp-109 and Asp-124. The chain crosses the membrane as a helical span at residues 120 to 140 (FNVADSFIVVGAIILGYLMIF).

This sequence belongs to the peptidase A8 family.

The protein localises to the cell membrane. It catalyses the reaction Release of signal peptides from bacterial membrane prolipoproteins. Hydrolyzes -Xaa-Yaa-Zaa-|-(S,diacylglyceryl)Cys-, in which Xaa is hydrophobic (preferably Leu), and Yaa (Ala or Ser) and Zaa (Gly or Ala) have small, neutral side chains.. It participates in protein modification; lipoprotein biosynthesis (signal peptide cleavage). Functionally, this protein specifically catalyzes the removal of signal peptides from prolipoproteins. The chain is Lipoprotein signal peptidase from Caldanaerobacter subterraneus subsp. tengcongensis (strain DSM 15242 / JCM 11007 / NBRC 100824 / MB4) (Thermoanaerobacter tengcongensis).